Here is a 615-residue protein sequence, read N- to C-terminus: Semenogelin-1 (615 aa).

The first 23 residues, 1–23 (MKPIIFLVLSLLLILEKQAAVMG), serve as a signal peptide directing secretion. Position 24 is a pyrrolidone carboxylic acid (Gln24). Disordered stretches follow at residues 24–118 (QKGG…EHGK), 133–160 (GHAP…SQDS), and 172–585 (GKEQ…HRSY). Residues 34-46 (SESSQFPHGQKGQ) are compositionally biased toward polar residues. A compositionally biased stretch (basic and acidic residues) spans 50-80 (ARKDKQHAESKRSVSIEHTYHVDIPDHDQTR). The segment covering 81-91 (TSKQYDLNAQN) has biased composition (polar residues). Over residues 107–118 (FNHKQEGREHGK) the composition is skewed to basic and acidic residues. Composition is skewed to polar residues over residues 138 to 160 (GTQN…SQDS), 177 to 196 (SVSG…SPVL), and 209 to 224 (TQNS…NVNE). 3 N-linked (GlcNAc...) asparagine glycosylation sites follow: Asn148, Asn184, and Asn223. Basic and acidic residues predominate over residues 241 to 253 (QEDRLQHGSKDVF). Over residues 254 to 265 (SKNQNQTRNPNQ) the composition is skewed to polar residues. Asn258 and Asn275 each carry an N-linked (GlcNAc...) asparagine glycan. A compositionally biased stretch (basic and acidic residues) spans 283-300 (TEERRPNHGEKGIQKDAS). N-linked (GlcNAc...) asparagine glycosylation occurs at Asn306. Over residues 308–317 (TEDKMHDKSQ) the composition is skewed to basic and acidic residues. Asn332 carries an N-linked (GlcNAc...) asparagine glycan. The span at 341-358 (TEERRPNHGEKGIQKDAS) shows a compositional bias: basic and acidic residues. N-linked (GlcNAc...) asparagine glycosylation occurs at Asn364. The span at 366 to 375 (TEDKMHDKSQ) shows a compositional bias: basic and acidic residues. N-linked (GlcNAc...) asparagine glycosylation occurs at Asn390. A compositionally biased stretch (basic and acidic residues) spans 399-416 (TEERRPNHGEKGIQKDAS). N-linked (GlcNAc...) asparagine glycosylation is present at Asn422. The span at 424-433 (TEDKMHDKSQ) shows a compositional bias: basic and acidic residues. Asn448 carries N-linked (GlcNAc...) asparagine glycosylation. Residues 457-474 (TEERRPNHGEKGIQKDAS) are compositionally biased toward basic and acidic residues. An N-linked (GlcNAc...) asparagine glycan is attached at Asn480. Over residues 481–491 (KTEDKMHDKSQ) the composition is skewed to basic and acidic residues. Asn506 carries an N-linked (GlcNAc...) asparagine glycan. Residues 515–532 (TEERRPNHGEKGIQKDAS) show a composition bias toward basic and acidic residues. An N-linked (GlcNAc...) asparagine glycan is attached at Asn538. Over residues 539 to 549 (KTEDEKHDKSQ) the composition is skewed to basic and acidic residues. A compositionally biased stretch (polar residues) spans 550–563 (KQVTTPSQDQQSGQ).

It belongs to the semenogelin family. Occurs in disulfide-linked complexes. Post-translationally, transglutaminase substrate. Rapidly cleaved after ejaculation by KLK3/PSA, resulting in liquefaction of the semen coagulum and the progressive release of motile spermatozoa.

It is found in the secreted. In terms of biological role, predominant protein in semen. It participates in the formation of a gel matrix entrapping the accessory gland secretions and ejaculated spermatozoa. Fragments of semenogelin and/or fragments of the related proteins may contribute to the activation of progressive sperm movements as the gel-forming proteins are fragmented by KLK3/PSA. In Saguinus oedipus (Cotton-top tamarin), this protein is Semenogelin-1 (SEMG1).